Here is a 498-residue protein sequence, read N- to C-terminus: Probable cytosol aminopeptidase (498 aa).

Mn(2+) is bound by residues K271 and D276. K283 is an active-site residue. Residues D294, D353, and E355 each contribute to the Mn(2+) site. R357 is an active-site residue.

The protein belongs to the peptidase M17 family. Mn(2+) serves as cofactor.

It is found in the cytoplasm. The enzyme catalyses Release of an N-terminal amino acid, Xaa-|-Yaa-, in which Xaa is preferably Leu, but may be other amino acids including Pro although not Arg or Lys, and Yaa may be Pro. Amino acid amides and methyl esters are also readily hydrolyzed, but rates on arylamides are exceedingly low.. The catalysed reaction is Release of an N-terminal amino acid, preferentially leucine, but not glutamic or aspartic acids.. Functionally, presumably involved in the processing and regular turnover of intracellular proteins. Catalyzes the removal of unsubstituted N-terminal amino acids from various peptides. This Bordetella petrii (strain ATCC BAA-461 / DSM 12804 / CCUG 43448) protein is Probable cytosol aminopeptidase.